The sequence spans 186 residues: LIM domain-containing protein DDB_G0271356 (186 aa).

LIM zinc-binding domains are found at residues 7 to 67 (PECY…DKFA), 68 to 127 (PKCQ…KIGF), and 128 to 186 (LCRH…KLYG).

The sequence is that of LIM domain-containing protein DDB_G0271356 from Dictyostelium discoideum (Social amoeba).